Here is a 666-residue protein sequence, read N- to C-terminus: Putative cysteine-rich receptor-like protein kinase 20 (666 aa).

A signal peptide spans 1 to 23 (MSSLICFIFLFLFSFITSFTASA). Residues 24-264 (QNPFYLYHNC…PRPGKGGNSS (241 aa)) are Extracellular-facing. Gnk2-homologous domains are found at residues 27–131 (FYLY…NRNI) and 137–241 (TDGG…NYEF). Residues Asn32, Asn42, Asn60, Asn69, and Asn103 are each glycosylated (N-linked (GlcNAc...) asparagine). Residue Asn262 is glycosylated (N-linked (GlcNAc...) asparagine). A helical membrane pass occupies residues 265–285 (VIVIAVVVPITVLFLLFVAFF). The Cytoplasmic segment spans residues 286 to 666 (SVRRAKRKKT…EASITSVAPR (381 aa)). Residues 344-623 (FLPINKLGQG…QMLTTSSIAL (280 aa)) form the Protein kinase domain. Residues 350-358 (LGQGGFGEV) and Lys372 contribute to the ATP site. Residue Tyr417 is modified to Phosphotyrosine. Residue Asp469 is the Proton acceptor of the active site. Position 509 is a phosphothreonine (Thr509). Phosphotyrosine is present on Tyr517.

It belongs to the protein kinase superfamily. Ser/Thr protein kinase family. CRK subfamily.

The protein resides in the membrane. The enzyme catalyses L-seryl-[protein] + ATP = O-phospho-L-seryl-[protein] + ADP + H(+). It carries out the reaction L-threonyl-[protein] + ATP = O-phospho-L-threonyl-[protein] + ADP + H(+). The sequence is that of Putative cysteine-rich receptor-like protein kinase 20 (CRK20) from Arabidopsis thaliana (Mouse-ear cress).